A 259-amino-acid polypeptide reads, in one-letter code: Proteasome subunit alpha (259 aa).

Belongs to the peptidase T1A family. In terms of assembly, the 20S proteasome core is composed of 14 alpha and 14 beta subunits that assemble into four stacked heptameric rings, resulting in a barrel-shaped structure. The two inner rings, each composed of seven catalytic beta subunits, are sandwiched by two outer rings, each composed of seven alpha subunits. The catalytic chamber with the active sites is on the inside of the barrel. Has a gated structure, the ends of the cylinder being occluded by the N-termini of the alpha-subunits. Is capped at one or both ends by the proteasome regulatory ATPase, PAN.

The protein localises to the cytoplasm. With respect to regulation, the formation of the proteasomal ATPase PAN-20S proteasome complex, via the docking of the C-termini of PAN into the intersubunit pockets in the alpha-rings, triggers opening of the gate for substrate entry. Interconversion between the open-gate and close-gate conformations leads to a dynamic regulation of the 20S proteasome proteolysis activity. Functionally, component of the proteasome core, a large protease complex with broad specificity involved in protein degradation. The chain is Proteasome subunit alpha from Methanococcus maripaludis (strain C6 / ATCC BAA-1332).